We begin with the raw amino-acid sequence, 431 residues long: Serine hydroxymethyltransferase 2 (431 aa).

(6S)-5,6,7,8-tetrahydrofolate is bound by residues leucine 131 and 135–137; that span reads GHL. Lysine 240 is subject to N6-(pyridoxal phosphate)lysine. Glutamate 256 is a (6S)-5,6,7,8-tetrahydrofolate binding site.

It belongs to the SHMT family. As to quaternary structure, homodimer. Requires pyridoxal 5'-phosphate as cofactor.

The protein localises to the cytoplasm. It catalyses the reaction (6R)-5,10-methylene-5,6,7,8-tetrahydrofolate + glycine + H2O = (6S)-5,6,7,8-tetrahydrofolate + L-serine. Its pathway is one-carbon metabolism; tetrahydrofolate interconversion. It participates in amino-acid biosynthesis; glycine biosynthesis; glycine from L-serine: step 1/1. Functionally, catalyzes the reversible interconversion of serine and glycine with tetrahydrofolate (THF) serving as the one-carbon carrier. This reaction serves as the major source of one-carbon groups required for the biosynthesis of purines, thymidylate, methionine, and other important biomolecules. Also exhibits THF-independent aldolase activity toward beta-hydroxyamino acids, producing glycine and aldehydes, via a retro-aldol mechanism. In Vibrio vulnificus (strain YJ016), this protein is Serine hydroxymethyltransferase 2.